A 420-amino-acid chain; its full sequence is 3-isopropylmalate dehydratase large subunit (420 aa).

Positions 300, 360, and 363 each coordinate [4Fe-4S] cluster.

Belongs to the aconitase/IPM isomerase family. LeuC type 2 subfamily. In terms of assembly, heterodimer of LeuC and LeuD. [4Fe-4S] cluster is required as a cofactor.

It carries out the reaction (2R,3S)-3-isopropylmalate = (2S)-2-isopropylmalate. It functions in the pathway amino-acid biosynthesis; L-leucine biosynthesis; L-leucine from 3-methyl-2-oxobutanoate: step 2/4. Its function is as follows. Catalyzes the isomerization between 2-isopropylmalate and 3-isopropylmalate, via the formation of 2-isopropylmaleate. In Helicobacter hepaticus (strain ATCC 51449 / 3B1), this protein is 3-isopropylmalate dehydratase large subunit.